Reading from the N-terminus, the 452-residue chain is RNA polymerase II-associated protein rba50 (452 aa).

3 disordered regions span residues L60 to E83, E125 to R202, and P223 to F261. Basic and acidic residues predominate over residues E125–S135. Over residues S136 to S154 the composition is skewed to polar residues. The span at E156–N165 shows a compositional bias: basic and acidic residues. Over residues S170 to S191 the composition is skewed to low complexity.

Belongs to the RPAP1 family. As to quaternary structure, interacts with RNA polymerase II.

It localises to the cytoplasm. The protein localises to the nucleus. Its function is as follows. Forms an interface between the RNA polymerase II enzyme and chaperone/scaffolding proteins, suggesting that it is required to connect RNA polymerase II to regulators of protein complex formation. The polypeptide is RNA polymerase II-associated protein rba50 (rba50) (Schizosaccharomyces pombe (strain 972 / ATCC 24843) (Fission yeast)).